The chain runs to 327 residues: Tryptophan--tRNA ligase (327 aa).

ATP-binding positions include 9 to 11 (QPS) and 17 to 18 (GN). A 'HIGH' region motif is present at residues 10–18 (PSGDIHIGN). Residue Asp132 participates in L-tryptophan binding. Residues 144–146 (GED), Ile183, and 192–196 (KMSKS) each bind ATP. Positions 192–196 (KMSKS) match the 'KMSKS' region motif.

It belongs to the class-I aminoacyl-tRNA synthetase family. In terms of assembly, homodimer.

The protein resides in the cytoplasm. The enzyme catalyses tRNA(Trp) + L-tryptophan + ATP = L-tryptophyl-tRNA(Trp) + AMP + diphosphate + H(+). Functionally, catalyzes the attachment of tryptophan to tRNA(Trp). In Caldanaerobacter subterraneus subsp. tengcongensis (strain DSM 15242 / JCM 11007 / NBRC 100824 / MB4) (Thermoanaerobacter tengcongensis), this protein is Tryptophan--tRNA ligase.